A 308-amino-acid chain; its full sequence is Ribosomal RNA small subunit methyltransferase H (308 aa).

S-adenosyl-L-methionine contacts are provided by residues 33–35 (GGY), Asp-51, Phe-82, Asp-96, and Gln-103.

The protein belongs to the methyltransferase superfamily. RsmH family.

It localises to the cytoplasm. The catalysed reaction is cytidine(1402) in 16S rRNA + S-adenosyl-L-methionine = N(4)-methylcytidine(1402) in 16S rRNA + S-adenosyl-L-homocysteine + H(+). Its function is as follows. Specifically methylates the N4 position of cytidine in position 1402 (C1402) of 16S rRNA. In Rickettsia canadensis (strain McKiel), this protein is Ribosomal RNA small subunit methyltransferase H.